A 449-amino-acid chain; its full sequence is C4-dicarboxylate transport protein (449 aa).

Transmembrane regions (helical) follow at residues 20–42, 62–84, 91–113, 164–181, 202–224, 239–261, 344–366, and 370–389; these read YLQL…HCYP, IISP…VGTV, AMVY…AHVV, ILQV…LALA, LVQM…TIGK, SFYL…FSGF, LALF…AGFI, and ATLT…ILGV.

The protein belongs to the dicarboxylate/amino acid:cation symporter (DAACS) (TC 2.A.23) family.

The protein localises to the cell inner membrane. Responsible for the transport of dicarboxylates such as succinate, fumarate, and malate from the periplasm across the inner membrane. The chain is C4-dicarboxylate transport protein (dctA) from Xylella fastidiosa (strain 9a5c).